The following is a 266-amino-acid chain: Protein-ADP-ribose hydrolase (266 aa).

In terms of domain architecture, Macro spans 74–265 (TDLKDLKPIK…LYKEALNRDA (192 aa)). Positions 93, 94, and 107 each coordinate ADP-D-ribose. Residues Cys113, His118, and Cys120 each contribute to the Zn(2+) site. Residues Cys120, Ile121, Asp122, Ser212, Thr213, Gly214, and Phe216 each coordinate ADP-D-ribose.

It belongs to the MacroD-type family. Zn-Macro subfamily. In terms of assembly, monomer. Directly interacts with the lipoylated form of GcvH-L. The cofactor is Zn(2+).

It catalyses the reaction 4-O-(ADP-D-ribosyl)-L-aspartyl-[protein] + H2O = L-aspartyl-[protein] + ADP-D-ribose + H(+). In terms of biological role, ADP-ribosylhydrolase that specifically reverses the SirTM-mediated mono-ADP-ribosylation at an asparatate residue of GcvH-L (SAV0324), by releasing ADP-ribose from the target protein. May play a role in the regulation of the response to host-induced oxidative stress. The sequence is that of Protein-ADP-ribose hydrolase from Staphylococcus aureus (strain Mu50 / ATCC 700699).